A 230-amino-acid chain; its full sequence is Phosphoribosylformylglycinamidine synthase subunit PurQ (230 aa).

In terms of domain architecture, Glutamine amidotransferase type-1 spans 3–230 (SAIIVFPGTN…LFQSIVESLS (228 aa)). Residue cysteine 87 is the Nucleophile of the active site. Active-site residues include histidine 204 and glutamate 206.

In terms of assembly, part of the FGAM synthase complex composed of 1 PurL, 1 PurQ and 2 PurS subunits.

It localises to the cytoplasm. It carries out the reaction N(2)-formyl-N(1)-(5-phospho-beta-D-ribosyl)glycinamide + L-glutamine + ATP + H2O = 2-formamido-N(1)-(5-O-phospho-beta-D-ribosyl)acetamidine + L-glutamate + ADP + phosphate + H(+). The catalysed reaction is L-glutamine + H2O = L-glutamate + NH4(+). Its pathway is purine metabolism; IMP biosynthesis via de novo pathway; 5-amino-1-(5-phospho-D-ribosyl)imidazole from N(2)-formyl-N(1)-(5-phospho-D-ribosyl)glycinamide: step 1/2. Part of the phosphoribosylformylglycinamidine synthase complex involved in the purines biosynthetic pathway. Catalyzes the ATP-dependent conversion of formylglycinamide ribonucleotide (FGAR) and glutamine to yield formylglycinamidine ribonucleotide (FGAM) and glutamate. The FGAM synthase complex is composed of three subunits. PurQ produces an ammonia molecule by converting glutamine to glutamate. PurL transfers the ammonia molecule to FGAR to form FGAM in an ATP-dependent manner. PurS interacts with PurQ and PurL and is thought to assist in the transfer of the ammonia molecule from PurQ to PurL. The chain is Phosphoribosylformylglycinamidine synthase subunit PurQ from Rhodospirillum rubrum (strain ATCC 11170 / ATH 1.1.1 / DSM 467 / LMG 4362 / NCIMB 8255 / S1).